A 574-amino-acid chain; its full sequence is Phosphate permease PHO89 (574 aa).

Residues 1–5 are Extracellular-facing; it reads MALHQ. A helical transmembrane segment spans residues 6 to 26; the sequence is FDYIFAIAMLFAFLDAFNIGA. At 27-43 the chain is on the cytoplasmic side; the sequence is NDVANSFASSISSRSLK. A helical transmembrane segment spans residues 44 to 64; the sequence is YWQAMVLAGLCEFLGAVLAGA. Over 65–84 the chain is Extracellular; sequence RVSGTIKNNIIDSSIFTNDP. The helical transmembrane segment at 85-105 threads the bilayer; it reads AVLMLTMTSALIGSSCWLTFA. The Cytoplasmic segment spans residues 106 to 117; that stretch reads TAIGMPVSTTHS. Residues 118–138 traverse the membrane as a helical segment; sequence IVGGTIGAGIAAGGANGVVWG. The Extracellular portion of the chain corresponds to 139 to 145; the sequence is WSGVSQI. The helical transmembrane segment at 146-166 threads the bilayer; it reads IASWFIAPILAGAIAAIVFSI. At 167–184 the chain is on the cytoplasmic side; that stretch reads SRFSVLEVKSLERSIKNA. Residues 185-205 form a helical membrane-spanning segment; the sequence is LLLVGVLVFATFSILTMLIVW. At 206 to 222 the chain is on the extracellular side; sequence KGSPNLHLDDLSETETA. A helical transmembrane segment spans residues 223–243; that stretch reads VSIVLTGAIASIVYFIFFYPF. Residues 244 to 354 are Cytoplasmic-facing; it reads YRRKVLDQDW…SLLKQGPKKW (111 aa). A disordered region spans residues 301 to 332; the sequence is EDEENKAASNSNDSVKNKEDIQEVDLVRTETE. Over residues 315-332 the composition is skewed to basic and acidic residues; the sequence is VKNKEDIQEVDLVRTETE. Residues 355-375 form a helical membrane-spanning segment; sequence PLLFWLVISHGWTQDVIHAQV. Residues 376-398 lie on the Extracellular side of the membrane; sequence NDRDMLSGDLKGMYERSKFYDNR. A helical membrane pass occupies residues 399-419; sequence VEYIYSVLQAITAATMSFAHG. The Cytoplasmic portion of the chain corresponds to 420-447; that stretch reads ANDVANATGPLSAVYVIWKTNTIGAKSE. The helical transmembrane segment at 448–468 threads the bilayer; that stretch reads VPVWVLAYGGVALVIGCWTYG. Topologically, residues 469–503 are extracellular; the sequence is YNIIKNLGNKMILQSPSRGFSIELAVAITTVMATQ. Residues 504–524 traverse the membrane as a helical segment; that stretch reads LGIPTSTTQIAVGGIVAVGLC. Topologically, residues 525–541 are cytoplasmic; sequence NKDLKSVNWRMVAWCYS. A helical membrane pass occupies residues 542–562; that stretch reads GWFLTLPIAGLIAGIINGIIL. Residues 563 to 574 are Extracellular-facing; sequence NAPRFGVEYQMT.

Belongs to the inorganic phosphate transporter (PiT) (TC 2.A.20) family. Forms homodimers and higher order homooligomers.

The protein resides in the cell membrane. It catalyses the reaction 2 Na(+)(out) + phosphate(out) = 2 Na(+)(in) + phosphate(in). With respect to regulation, weakly stimulated by Li(+) and K(+). Inhibited by monensin. Inhibited by phosphonoacetic acid. Inhibited by methylphosphonate. Inhibited by dimethylphosphonate. Functionally, sodium-phosphate symporter. Active in early growth phase. This chain is Phosphate permease PHO89 (PHO89), found in Saccharomyces cerevisiae (strain ATCC 204508 / S288c) (Baker's yeast).